Consider the following 1032-residue polypeptide: GPI inositol-deacylase (1032 aa).

Asn-12 carries an N-linked (GlcNAc...) asparagine glycan. A helical membrane pass occupies residues 15-35 (ILTLVSFFGLVLFYLTWYLYT). Residue Ser-195 is part of the active site. 2 N-linked (GlcNAc...) asparagine glycosylation sites follow: Asn-520 and Asn-555. The next 2 membrane-spanning stretches (helical) occupy residues 703-723 (LATISFCVSIILLALVFQVKH) and 740-760 (ICSPWVFGSILFTLSILTPIM). Asn-784 carries N-linked (GlcNAc...) asparagine glycosylation. 3 consecutive transmembrane segments (helical) span residues 805–825 (LWFIGPVFFVMGLGIVSLTFY), 861–880 (WANRRIIGVLFVLLVIPIYM), and 884–903 (FAYVVSCIIQSIQVIKILVA). N-linked (GlcNAc...) asparagine glycosylation is present at Asn-907. Residues 916–936 (SLLMLMLWVLPINVPILVVFV) form a helical membrane-spanning segment. N-linked (GlcNAc...) asparagine glycans are attached at residues Asn-938 and Asn-942. The next 2 helical transmembrane spans lie at 943–963 (WTTPFSSHHNFLAILPVILLM) and 985–1005 (AFLAYYVFYCLVYGIRHTYWI).

It belongs to the GPI inositol-deacylase family.

It localises to the endoplasmic reticulum membrane. Functionally, involved in inositol deacylation of GPI-anchored proteins which plays important roles in the quality control and ER-associated degradation of GPI-anchored proteins. In Debaryomyces hansenii (strain ATCC 36239 / CBS 767 / BCRC 21394 / JCM 1990 / NBRC 0083 / IGC 2968) (Yeast), this protein is GPI inositol-deacylase (BST1).